We begin with the raw amino-acid sequence, 286 residues long: ATP synthase gamma chain (286 aa).

Belongs to the ATPase gamma chain family. In terms of assembly, F-type ATPases have 2 components, CF(1) - the catalytic core - and CF(0) - the membrane proton channel. CF(1) has five subunits: alpha(3), beta(3), gamma(1), delta(1), epsilon(1). CF(0) has three main subunits: a, b and c.

Its subcellular location is the cell inner membrane. Functionally, produces ATP from ADP in the presence of a proton gradient across the membrane. The gamma chain is believed to be important in regulating ATPase activity and the flow of protons through the CF(0) complex. This chain is ATP synthase gamma chain, found in Shewanella sediminis (strain HAW-EB3).